The primary structure comprises 391 residues: Casein kinase II subunit alpha (391 aa).

The segment at Gln-36 to Leu-41 is interaction with beta subunit. The region spanning Tyr-39 to Phe-324 is the Protein kinase domain. Residues Leu-45 to Val-53 and Lys-68 each bind ATP. The Proton acceptor role is filled by Asp-156. Residues Thr-344 and Thr-360 each carry the phosphothreonine; by CDK1 modification. Phosphoserine; by CDK1 is present on residues Ser-362 and Ser-370.

It belongs to the protein kinase superfamily. Ser/Thr protein kinase family. CK2 subfamily. In terms of assembly, heterotetramer composed of two catalytic subunits (alpha chain and/or alpha' chain) and two regulatory subunits (beta chains). The tetramer can exist as a combination of 2 alpha/2 beta, 2 alpha'/2 beta or 1 alpha/1 alpha'/2 beta subunits. Also part of a CK2-SPT16-SSRP1 complex composed of SSRP1, SUPT16H, CSNK2A1, CSNK2A2 and CSNK2B, which forms following UV irradiation. Interacts with RNPS1. Interacts with SNAI1. Interacts with PML. Interacts with CCAR2. Interacts with HIRIP3. Phosphorylated at Thr-344, Thr-360, Ser-362 and Ser-370 by CDK1 in prophase and metaphase and dephosphorylated during anaphase. Phosphorylation does not directly affect casein kinase 2 activity, but may contribute to its regulation by forming binding sites for interacting proteins and/or targeting it to different compartments.

The protein localises to the nucleus. The enzyme catalyses L-seryl-[protein] + ATP = O-phospho-L-seryl-[protein] + ADP + H(+). It carries out the reaction L-threonyl-[protein] + ATP = O-phospho-L-threonyl-[protein] + ADP + H(+). With respect to regulation, constitutively active protein kinase whose activity is not directly affected by phosphorylation. Seems to be regulated by level of expression and localization. Functionally, catalytic subunit of a constitutively active serine/threonine-protein kinase complex that phosphorylates a large number of substrates containing acidic residues C-terminal to the phosphorylated serine or threonine. Regulates numerous cellular processes, such as cell cycle progression, apoptosis and transcription, as well as viral infection. May act as a regulatory node which integrates and coordinates numerous signals leading to an appropriate cellular response. During mitosis, functions as a component of the p53/TP53-dependent spindle assembly checkpoint (SAC) that maintains cyclin-B-CDK1 activity and G2 arrest in response to spindle damage. Also required for p53/TP53-mediated apoptosis, phosphorylating 'Ser-392' of p53/TP53 following UV irradiation. Phosphorylates a number of DNA repair proteins in response to DNA damage, such as MDC1, MRE11, RAD9A, RAD51 and HTATSF1, promoting their recruitment to DNA damage sites. Can also negatively regulate apoptosis. Phosphorylates the caspases CASP9 and CASP2 and the apoptotic regulator NOL3. Phosphorylation protects CASP9 from cleavage and activation by CASP8, and inhibits the dimerization of CASP2 and activation of CASP8. Phosphorylates YY1, protecting YY1 from cleavage by CASP7 during apoptosis. Regulates transcription by direct phosphorylation of RNA polymerases I, II, III and IV. Also phosphorylates and regulates numerous transcription factors including NF-kappa-B, STAT1, CREB1, IRF1, IRF2, ATF1, ATF4, SRF, MAX, JUN, FOS, MYC and MYB. Phosphorylates Hsp90 and its co-chaperones FKBP4 and CDC37, which is essential for chaperone function. Mediates sequential phosphorylation of FNIP1, promoting its gradual interaction with Hsp90, leading to activate both kinase and non-kinase client proteins of Hsp90. Regulates Wnt signaling by phosphorylating CTNNB1 and the transcription factor LEF1. Acts as an ectokinase that phosphorylates several extracellular proteins. Phosphorylates PML at 'Ser-565' and primes it for ubiquitin-mediated degradation. Plays an important role in the circadian clock function by phosphorylating BMAL1 at 'Ser-90' which is pivotal for its interaction with CLOCK and which controls CLOCK nuclear entry. Phosphorylates FMR1, promoting FMR1-dependent formation of a membraneless compartment. May phosphorylate histone H2A on 'Ser-1'. The chain is Casein kinase II subunit alpha (Csnk2a1) from Rattus norvegicus (Rat).